The primary structure comprises 338 residues: Mitoferrin-1 (338 aa).

The tract at residues 1-42 (MELRSGSVGSQAVARRMDGDSRDGGGGKDATGSEDYENLPTS) is disordered. Basic and acidic residues predominate over residues 15-26 (RRMDGDSRDGGG). 3 Solcar repeats span residues 43 to 131 (ASVS…MKRT), 141 to 225 (NSHL…LQEQ), and 232 to 326 (YNPQ…FKYF). 6 consecutive transmembrane segments (helical) span residues 45–64 (VSTH…SVMY), 106–125 (GVNV…FACY), 143–162 (HLAN…AVMN), 200–219 (SYTT…FITY), 234–253 (PQSH…AATT), and 301–320 (GIQA…WSVY).

It belongs to the mitochondrial carrier (TC 2.A.29) family. Interacts with ACB10; this interaction stabilizes SLC25A37 and enhances the function of SLC25A37 to import mitochondrial iron during erythroid differentiation.

The protein resides in the mitochondrion inner membrane. The enzyme catalyses Fe(2+)(in) = Fe(2+)(out). In terms of biological role, mitochondrial iron transporter that specifically mediates iron uptake in developing erythroid cells, thereby playing an essential role in heme biosynthesis. This Homo sapiens (Human) protein is Mitoferrin-1 (SLC25A37).